The chain runs to 228 residues: uncharacterized protein (228 aa).

Positions M1–Y34 are disordered.

This is an uncharacterized protein from Orgyia pseudotsugata (Douglas-fir tussock moth).